A 108-amino-acid chain; its full sequence is DNA-binding protein HBbu (108 aa).

The protein belongs to the bacterial histone-like protein family.

Histone-like DNA-binding protein which is capable of wrapping DNA to stabilize it, and thus to prevent its denaturation under extreme environmental conditions. This is DNA-binding protein HBbu (hbb) from Borrelia andersonii (Borreliella andersonii).